Consider the following 700-residue polypeptide: Autophagy-related protein 13 (700 aa).

A disordered region spans residues 319–352 (GSINSSSSPPPGATQSNQSVSSFSTSKPIPVTLN). The segment covering 332–344 (TQSNQSVSSFSTS) has biased composition (low complexity). The interval 399–407 (SSFGSRFRT) is ATG17-binding. Residues 428–487 (TPNNPILHNFRSRNKSPSVSSTELGPSSSIYMDDDLDSFMKMLDSKPDLRFPSNSPSVYE) form an ATG1-binding region. Polar residues predominate over residues 506–532 (EQQQHGSPSSNQIMIHSQSQTSQSQVF). 3 disordered regions span residues 506 to 562 (EQQQ…PGVS), 576 to 637 (HASS…NPEL), and 649 to 700 (ESDD…NQEF). Positions 595 to 631 (SSPPASATAVATVHNSLRRLTSSSQRTNTNSTNSSTR) are enriched in low complexity. The span at 656–667 (DEHSPRSTDTKS) shows a compositional bias: basic and acidic residues.

This sequence belongs to the ATG13 family. Fungi subfamily. In terms of assembly, hypophosphorylated form interacts with ATG1 to form the ATG1-ATG13 kinase complex. The ATG1-ATG13 complex interacts with the ATG17-ATG29-ATG31 complex through direct interaction with ATG17. Interacts with VAC8.

The protein localises to the cytoplasm. The protein resides in the preautophagosomal structure. Its function is as follows. Activates the ATG1 kinase in a nutritional condition dependent manner through the TOR pathway, leading to autophagy. Involved in ATG9 and ATG23 cycling through the pre-autophagosomal structure. Also involved in cytoplasm to vacuole transport (Cvt) and more specifically in Cvt vesicle formation. Seems to play a role in the switching machinery regulating the conversion between the Cvt pathway and autophagy. Finally, ATG13 is also required for glycogen storage during stationary phase. In terms of biological role, acts as a negative regulator of xylose alcoholic fermentation, a role that is not related to autophagy. The sequence is that of Autophagy-related protein 13 from Ogataea parapolymorpha (strain ATCC 26012 / BCRC 20466 / JCM 22074 / NRRL Y-7560 / DL-1) (Yeast).